A 245-amino-acid chain; its full sequence is 1-(5-phosphoribosyl)-5-[(5-phosphoribosylamino)methylideneamino] imidazole-4-carboxamide isomerase (245 aa).

Catalysis depends on aspartate 7, which acts as the Proton acceptor. The active-site Proton donor is aspartate 129.

This sequence belongs to the HisA/HisF family.

It localises to the cytoplasm. The enzyme catalyses 1-(5-phospho-beta-D-ribosyl)-5-[(5-phospho-beta-D-ribosylamino)methylideneamino]imidazole-4-carboxamide = 5-[(5-phospho-1-deoxy-D-ribulos-1-ylimino)methylamino]-1-(5-phospho-beta-D-ribosyl)imidazole-4-carboxamide. Its pathway is amino-acid biosynthesis; L-histidine biosynthesis; L-histidine from 5-phospho-alpha-D-ribose 1-diphosphate: step 4/9. This chain is 1-(5-phosphoribosyl)-5-[(5-phosphoribosylamino)methylideneamino] imidazole-4-carboxamide isomerase, found in Citrobacter koseri (strain ATCC BAA-895 / CDC 4225-83 / SGSC4696).